Reading from the N-terminus, the 283-residue chain is Tetrahydroxynaphthalene reductase (283 aa).

The disordered stretch occupies residues 1-21 (MPAVTQPRGESKYDAIPGPLG). Residue 39-63 (RGIGREMAMELGRRGCKVIVNYANS) participates in NADP(+) binding. Ser-164 lines the substrate pocket. Tyr-178 acts as the Proton acceptor in catalysis.

It belongs to the short-chain dehydrogenases/reductases (SDR) family. As to quaternary structure, homotetramer.

The enzyme catalyses scytalone + NADP(+) = naphthalene-1,3,6,8-tetrol + NADPH + H(+). Its pathway is pigment biosynthesis; melanin biosynthesis. Functionally, catalyzes the NADPH-dependent reduction of 1,3,6,8-tetrahydroxynaphthalene (T4HN) into (+)-scytalone and 1,3,8-trihydroxynaphthalene into (-)-vermelone. This enzyme is the biochemical target of several commercially important fungicides which are used to prevent blast disease in rice plants. The sequence is that of Tetrahydroxynaphthalene reductase from Pyricularia oryzae (strain 70-15 / ATCC MYA-4617 / FGSC 8958) (Rice blast fungus).